We begin with the raw amino-acid sequence, 190 residues long: Large ribosomal subunit protein bL9 (190 aa).

The protein belongs to the bacterial ribosomal protein bL9 family.

Its function is as follows. Binds to the 23S rRNA. This chain is Large ribosomal subunit protein bL9, found in Methylorubrum populi (strain ATCC BAA-705 / NCIMB 13946 / BJ001) (Methylobacterium populi).